Reading from the N-terminus, the 219-residue chain is MKFFVDSADVAAIAELNALGMVDGVTTNPSLILKSGRNILEVTREICDLVAGPVSAEVVAAKADDMIEEGRKLAEIAPNITVKVPLTWDGLKACKVLTDEGRMVNVTLCFSVNQALLAAKAGATFISPFIGRLDDINLDGLELIADIRQVYDNYDFQTEVLAASIRTPNHVAQCARIGADVITAPPAVIKGLANHVLTDKGLEMFDADWAKTGQTILSL.

The active-site Schiff-base intermediate with substrate is K83.

Belongs to the transaldolase family. Type 3B subfamily.

It is found in the cytoplasm. The enzyme catalyses D-sedoheptulose 7-phosphate + D-glyceraldehyde 3-phosphate = D-erythrose 4-phosphate + beta-D-fructose 6-phosphate. It functions in the pathway carbohydrate degradation; pentose phosphate pathway; D-glyceraldehyde 3-phosphate and beta-D-fructose 6-phosphate from D-ribose 5-phosphate and D-xylulose 5-phosphate (non-oxidative stage): step 2/3. Functionally, transaldolase is important for the balance of metabolites in the pentose-phosphate pathway. This chain is Probable transaldolase, found in Cereibacter sphaeroides (strain ATCC 17025 / ATH 2.4.3) (Rhodobacter sphaeroides).